An 838-amino-acid chain; its full sequence is Ras-interacting protein RIP3 (838 aa).

Disordered regions lie at residues 66–97 (VSTSNNNATSGNSTPPNNAISPNQQQQQQQQA), 157–290 (KPTT…TSPK), and 305–336 (NSKTLQKSDKTSEKENKQQQPDSSKTQQQQQA). Composition is skewed to low complexity over residues 67-97 (STSNNNATSGNSTPPNNAISPNQQQQQQQQA), 157-241 (KPTT…QQKP), and 248-284 (PQNISQPQNISQQQNTNNVQQNNQQQQQQQQQQQQQQ). A compositionally biased stretch (basic and acidic residues) spans 310-321 (QKSDKTSEKENK). The CRIM domain maps to 441–515 (QLKVRVIEKA…KDEVLVLCPN (75 aa)). 2 disordered regions span residues 522-581 (KSSS…QQTQ) and 594-646 (QQQQ…GPDA). Low complexity-rich tracts occupy residues 537-556 (NNNNSVNSNSSNNSNSSNNN), 563-581 (QPQQSQQQQQQTQQTQQTQ), and 594-620 (QQQQQQQQQHPQQIQQQLSSNQLQPDQ). A compositionally biased stretch (gly residues) spans 621 to 631 (VGGGGGGGGGN). Positions 648–717 (LVVKITLPDS…GGADLILVSR (70 aa)) constitute an RBD domain.

This sequence belongs to the SIN1 family. In terms of assembly, interacts with activated RasG. Part of a complex, TORC2, consisting of tor, lst8, piaA and ripA. Additional proteins, such as 14-3-3 and heat-shock proteins, may also belong to the TORC2 complex.

In terms of biological role, component of a Ras-regulated pathway involved in integrating chemotaxis and signal relay pathways that are essential for aggregation. The polypeptide is Ras-interacting protein RIP3 (ripA) (Dictyostelium discoideum (Social amoeba)).